A 2904-amino-acid chain; its full sequence is Protein eyes shut homolog (2904 aa).

Residues 1-23 (MRNPKLAIIVFLLSCVIYGPVYS) form the signal peptide. Asn41 and Asn135 each carry an N-linked (GlcNAc...) asparagine glycan. EGF-like domains are found at residues 174-216 (KPQL…RYCE), 217-259 (NVDG…VNCS), 263-298 (GNQNCSKWCKEGACLKVSSTSYRCECFTGYTGTYCE), and 300-336 (KRLFCDSNPCRNDGRCEETANGYVCTCPGGFTGLNCE). Disulfide bonds link Cys178–Cys193, Cys187–Cys204, Cys206–Cys215, Cys221–Cys232, Cys226–Cys247, and Cys249–Cys258. N-linked (GlcNAc...) asparagine glycans are attached at residues Asn257 and Asn266. 6 disulfides stabilise this stretch: Cys267/Cys276, Cys271/Cys286, Cys288/Cys297, Cys304/Cys315, Cys309/Cys324, and Cys326/Cys335. Asn362 is a glycosylation site (N-linked (GlcNAc...) asparagine). EGF-like domains follow at residues 375–411 (QAEVCGTLPCLNGGICVVPNGQYHCRCRQGFSGKNCE), 413–451 (IIDFCKLLNINCLNEGLCLNRVGGYNCLCAPGWTGEFCQ), and 453–496 (LENA…PYCE). 12 disulfide bridges follow: Cys379–Cys390, Cys384–Cys399, Cys401–Cys410, Cys417–Cys430, Cys424–Cys439, Cys441–Cys450, Cys457–Cys470, Cys464–Cys484, Cys486–Cys495, Cys502–Cys513, Cys507–Cys522, and Cys524–Cys533. An EGF-like 8; calcium-binding domain is found at 498-534 (EVNECDSSPCQHQGTCTDFVGYYKCTCPSGYTGIDCE). N-linked (GlcNAc...) asparagine glycosylation occurs at Asn544. One can recognise an EGF-like 9 domain in the interval 565–603 (HTPCPHYLQPCANGGHCVLHNITSYSCVCAPGWTGATCL). 78 disulfide bridges follow: Cys568/Cys581, Cys575/Cys591, Cys593/Cys602, Cys609/Cys620, Cys614/Cys629, Cys631/Cys640, Cys645/Cys656, Cys650/Cys665, Cys667/Cys676, Cys683/Cys694, Cys688/Cys703, Cys705/Cys714, Cys721/Cys732, Cys726/Cys741, Cys743/Cys752, Cys759/Cys772, Cys764/Cys781, Cys783/Cys792, Cys799/Cys810, Cys804/Cys819, Cys821/Cys830, Cys837/Cys848, Cys842/Cys857, Cys859/Cys868, Cys875/Cys886, Cys880/Cys895, Cys897/Cys906, Cys913/Cys924, Cys918/Cys933, Cys935/Cys944, Cys951/Cys962, Cys956/Cys971, Cys973/Cys982, Cys987/Cys999, Cys993/Cys1014, Cys1016/Cys1025, Cys1032/Cys1042, Cys1037/Cys1051, Cys1053/Cys1062, Cys1069/Cys1080, Cys1074/Cys1089, Cys1091/Cys1100, Cys1107/Cys1118, Cys1112/Cys1127, Cys1129/Cys1138, Cys1145/Cys1156, Cys1150/Cys1167, Cys1169/Cys1178, Cys1185/Cys1198, Cys1192/Cys1208, Cys1210/Cys1219, Cys1226/Cys1237, Cys1231/Cys1246, Cys1248/Cys1257, Cys1264/Cys1275, Cys1269/Cys1284, Cys1286/Cys1295, Cys1302/Cys1313, Cys1307/Cys1322, Cys1324/Cys1333, Cys1340/Cys1351, Cys1345/Cys1360, Cys1362/Cys1371, Cys1378/Cys1388, Cys1383/Cys1397, Cys1399/Cys1408, Cys1415/Cys1426, Cys1420/Cys1435, Cys1437/Cys1446, Cys1453/Cys1469, Cys1463/Cys1479, Cys1481/Cys1490, Cys1497/Cys1508, Cys1502/Cys1517, Cys1519/Cys1528, Cys1535/Cys1545, Cys1540/Cys1556, and Cys1558/Cys1567. Asn585 carries an N-linked (GlcNAc...) asparagine glycan. Residues 605-641 (NINECVQHRCQNRATCVDEVGGYSCLCGHGYTGVHCE) form the EGF-like 10; calcium-binding domain. The 36-residue stretch at 642-677 (LDFCSGHQCSEHAVCVDQQHNYTCRCMLGYEGTLCE) folds into the EGF-like 11 domain. Asn662 carries N-linked (GlcNAc...) asparagine glycosylation. An EGF-like 12; calcium-binding domain is found at 679–715 (ETDECKSAPCTNNATCIDLVAGYQCLCAPGFKGRTCS). Asn691 carries N-linked (GlcNAc...) asparagine glycosylation. EGF-like domains lie at 717–753 (SMNECWSRPCNNGGSCIDLVNDYICNCPLGFTGHDCS), 755–793 (PATGCTSNPCNTKGTSMCEEQQDGFKCVCHHGYTGLFCE), and 795–831 (SINHCVEGLCHHGSECVDLTKGFMCECLPGLRGRLCE). The 37-residue stretch at 833–869 (NIDDCLDKPCGALSICKDGINAYDCFCAPGFVGNNCE) folds into the EGF-like 16; calcium-binding domain. The EGF-like 17; calcium-binding domain occupies 871 to 907 (EVNECLSQPCQNGASCSDELNSFSCLCLAGTTGSLCE). Positions 909-945 (NIDECQSSPCMNNGTCLDLSDGFKCICPSGFSGPECS) constitute an EGF-like 18; calcium-binding domain. N-linked (GlcNAc...) asparagine glycosylation is present at Asn921. Residues 947 to 983 (DINECVSYPCKNGGSCIDQPGNYYCRCLAPFKGLNCE) enclose the EGF-like 19; calcium-binding domain. Residues 984–1026 (LLPCEAVNPCDNGAECVEEADLVLFPLGFQCRCRKGFTGPRCE) enclose the EGF-like 20 domain. An EGF-like 21; calcium-binding domain is found at 1028–1063 (NIDECSSNPCLNGFCYDAVDGFYCLCNPGYAGVRCE). Residues 1065–1101 (HINDCASNMCENNSTCVDLHLSYNCLCLPGWEGEYCQ) form the EGF-like 22 domain. Asn1077 carries N-linked (GlcNAc...) asparagine glycosylation. An EGF-like 23; calcium-binding domain is found at 1103-1139 (ETNECLSNPCKNNATCTDLLNAYRCVCPQGWTGLDCD). N-linked (GlcNAc...) asparagine glycosylation is present at Asn1115. EGF-like domains lie at 1141 to 1179 (DVKECSSSPCLNGAHCVESDTPGEFSCTCPPFFTGPLCE) and 1181 to 1220 (PYDPCELQRNPCLHNSTCRAQSDGTALCVCPVGFEGTRCE). N-linked (GlcNAc...) asparagine glycosylation is present at Asn1195. The EGF-like 26; calcium-binding domain occupies 1222-1258 (DSDDCVSRPCQNRGICVDGVNSYSCFCEPGFSGLHCE). The region spanning 1260-1296 (DINECASNPCQNQAVCQDLVNGFQCSCVPGYFGPHCN) is the EGF-like 27; calcium-binding domain. The region spanning 1298–1334 (DVNECDSSPCLHESVCINKPGGFACVCSAGFSGKWCE) is the EGF-like 28; calcium-binding domain. The 37-residue stretch at 1336–1372 (NVDECKSNPCRNNGSCIDGLNGYQCVCSRGFMGDHCE) folds into the EGF-like 29; calcium-binding domain. Asn1348 carries N-linked (GlcNAc...) asparagine glycosylation. The EGF-like 30; calcium-binding domain occupies 1374-1409 (NTDECSSGPCVHGSCLDEIDAFSCQCEVGWTGHRCQ). Residues 1411-1447 (NINECEAHPCLNGGSCVDLLDKYACICADGFTGKNCD) form the EGF-like 31; calcium-binding domain. An EGF-like 32 domain is found at 1449-1491 (DQNVCLQTSLNFSLCFNGGTCVDGPGVNFTCSCRPGFMGDFCE). 2 N-linked (GlcNAc...) asparagine glycosylation sites follow: Asn1459 and Asn1476. Residues 1493–1529 (EMNECCSEPCFNGAICQDLINGYQCHCRPGWTGLHCE) enclose the EGF-like 33; calcium-binding domain. The region spanning 1531 to 1568 (DINECLLQPCNQGMCIQNEPGHGYTCFCRPGFVGENCE) is the EGF-like 34 domain. N-linked (GlcNAc...) asparagine glycosylation is found at Asn1591, Asn1755, and Asn1788. The 179-residue stretch at 1640–1818 (ASFGGYSGNS…AIARNNVDNC (179 aa)) folds into the Laminin G-like 1 domain. 4 disulfide bridges follow: Cys1792–Cys1818, Cys1860–Cys1871, Cys1865–Cys1885, and Cys1887–Cys1896. An EGF-like 35 domain is found at 1856-1897 (PAPVCPQGICLNGGTCRPVSLPSGASSFFCDCPLHFTGRLCE). Residues 1902–2102 (VFSPRFDGNS…NIQNCDAAVC (201 aa)) form the Laminin G-like 2 domain. Asn2025 and Asn2064 each carry an N-linked (GlcNAc...) asparagine glycan. 7 disulfide bridges follow: Cys2071–Cys2102, Cys2102–Cys2113, Cys2107–Cys2122, Cys2124–Cys2133, Cys2138–Cys2149, Cys2143–Cys2159, and Cys2161–Cys2170. EGF-like domains lie at 2098–2134 (DAAVCQHQPCRNGGTCISDAESWFCACPSLYSGKLCQ) and 2135–2171 (FTACERNPCARGATCVPQTQLEAACLCPYGRQGLLCD). N-linked (GlcNAc...) asparagine glycans are attached at residues Asn2175 and Asn2216. Residues 2182 to 2372 (SGLDEFGYSS…PLSGRNVGQC (191 aa)) enclose the Laminin G-like 3 domain. 7 disulfides stabilise this stretch: Cys2339–Cys2372, Cys2377–Cys2388, Cys2382–Cys2397, Cys2399–Cys2408, Cys2415–Cys2431, Cys2425–Cys2440, and Cys2442–Cys2451. EGF-like domains are found at residues 2373 to 2409 (GVNPCSLVFCHNGGTCVDSGSSVYCQCVFGWKGALCS) and 2411 to 2452 (KVSF…LHCQ). The region spanning 2459 to 2642 (DPFFSGNQSS…NVGDWDGTAC (184 aa)) is the Laminin G-like 4 domain. N-linked (GlcNAc...) asparagine glycosylation is found at Asn2465, Asn2528, and Asn2570. EGF-like domains lie at 2638–2675 (DGTACGYKVCKNGGHCHPSGDFSFTCICPSLWTGSRCQ) and 2676–2714 (QSIQCLNNLCQHNSVCIHNSTSASYSCMCSLGWTGTHCD). 6 cysteine pairs are disulfide-bonded: Cys2642/Cys2653, Cys2647/Cys2663, Cys2665/Cys2674, Cys2680/Cys2691, Cys2685/Cys2702, and Cys2704/Cys2713. The N-linked (GlcNAc...) asparagine glycan is linked to Asn2694. The Laminin G-like 5 domain maps to 2719–2894 (LKTIRFIGNS…TKQLQFLQTC (176 aa)). Residues Asn2750 and Asn2816 are each glycosylated (N-linked (GlcNAc...) asparagine).

This sequence belongs to the EYS family. Expressed in retina where it localizes between the retinal pigment epithelium and the outer nuclear layer (at protein level).

The protein resides in the cell projection. The protein localises to the cilium. It localises to the cytoplasm. Its subcellular location is the cytoskeleton. It is found in the cilium axoneme. The protein resides in the secreted. The protein localises to the extracellular space. It localises to the extracellular matrix. Its subcellular location is the interphotoreceptor matrix. Its function is as follows. Required to maintain the integrity of photoreceptor cells. Specifically required for normal morphology of the photoreceptor ciliary pocket, and might thus facilitate protein trafficking between the photoreceptor inner and outer segments via the transition zone. This Danio rerio (Zebrafish) protein is Protein eyes shut homolog.